The sequence spans 481 residues: Small ribosomal subunit protein bS1 (481 aa).

4 consecutive S1 motif domains span residues G36–K105, D123–R188, G209–K277, and G294–K363. The interval T429–D467 is disordered. The span at A437 to S456 shows a compositional bias: low complexity.

The protein belongs to the bacterial ribosomal protein bS1 family.

Its function is as follows. Binds mRNA; thus facilitating recognition of the initiation point. It is needed to translate mRNA with a short Shine-Dalgarno (SD) purine-rich sequence. This Mycobacterium tuberculosis (strain CDC 1551 / Oshkosh) protein is Small ribosomal subunit protein bS1 (rpsA).